The sequence spans 245 residues: 4-hydroxy-tetrahydrodipicolinate reductase (245 aa).

NAD(+) contacts are provided by residues 7 to 12, 75 to 77, and 102 to 105; these read GAKGKV, GTT, and APNF. Histidine 132 functions as the Proton donor/acceptor in the catalytic mechanism. A (S)-2,3,4,5-tetrahydrodipicolinate-binding site is contributed by histidine 133. Lysine 136 (proton donor) is an active-site residue. 142-143 is a (S)-2,3,4,5-tetrahydrodipicolinate binding site; that stretch reads GT.

Belongs to the DapB family.

It localises to the cytoplasm. The catalysed reaction is (S)-2,3,4,5-tetrahydrodipicolinate + NAD(+) + H2O = (2S,4S)-4-hydroxy-2,3,4,5-tetrahydrodipicolinate + NADH + H(+). It catalyses the reaction (S)-2,3,4,5-tetrahydrodipicolinate + NADP(+) + H2O = (2S,4S)-4-hydroxy-2,3,4,5-tetrahydrodipicolinate + NADPH + H(+). It participates in amino-acid biosynthesis; L-lysine biosynthesis via DAP pathway; (S)-tetrahydrodipicolinate from L-aspartate: step 4/4. Its function is as follows. Catalyzes the conversion of 4-hydroxy-tetrahydrodipicolinate (HTPA) to tetrahydrodipicolinate. The polypeptide is 4-hydroxy-tetrahydrodipicolinate reductase (Mycobacterium sp. (strain KMS)).